The sequence spans 161 residues: Dihydrofolate reductase (161 aa).

Residues 2–161 form the DHFR domain; it reads KISLISAISN…YNFCFEILSR (160 aa). Residue 6–8 coordinates substrate; the sequence is ISA. NADP(+) is bound by residues 7-8 and 15-20; these read SA and IGHNNK. Position 28 (D28) interacts with substrate. 44-47 contributes to the NADP(+) binding site; the sequence is GRLT. R59 is a substrate binding site. NADP(+) is bound by residues 64–66 and 96–101; these read ISH and IGGSKI. Position 115 (T115) interacts with substrate.

It belongs to the dihydrofolate reductase family.

The enzyme catalyses (6S)-5,6,7,8-tetrahydrofolate + NADP(+) = 7,8-dihydrofolate + NADPH + H(+). Its pathway is cofactor biosynthesis; tetrahydrofolate biosynthesis; 5,6,7,8-tetrahydrofolate from 7,8-dihydrofolate: step 1/1. Its function is as follows. Key enzyme in folate metabolism. Catalyzes an essential reaction for de novo glycine and purine synthesis, and for DNA precursor synthesis. This chain is Dihydrofolate reductase (folA), found in Buchnera aphidicola subsp. Schizaphis graminum (strain Sg).